A 221-amino-acid chain; its full sequence is Probable chemoreceptor glutamine deamidase CheD 1 (221 aa).

This sequence belongs to the CheD family.

The enzyme catalyses L-glutaminyl-[protein] + H2O = L-glutamyl-[protein] + NH4(+). Probably deamidates glutamine residues to glutamate on methyl-accepting chemotaxis receptors (MCPs), playing an important role in chemotaxis. The polypeptide is Probable chemoreceptor glutamine deamidase CheD 1 (Methanosarcina mazei (strain ATCC BAA-159 / DSM 3647 / Goe1 / Go1 / JCM 11833 / OCM 88) (Methanosarcina frisia)).